A 122-amino-acid polypeptide reads, in one-letter code: Large ribosomal subunit protein uL14 (122 aa).

Belongs to the universal ribosomal protein uL14 family. In terms of assembly, part of the 50S ribosomal subunit. Forms a cluster with proteins L3 and L19. In the 70S ribosome, L14 and L19 interact and together make contacts with the 16S rRNA in bridges B5 and B8.

Binds to 23S rRNA. Forms part of two intersubunit bridges in the 70S ribosome. In Enterococcus faecalis (strain ATCC 700802 / V583), this protein is Large ribosomal subunit protein uL14.